A 300-amino-acid polypeptide reads, in one-letter code: Meiotically up-regulated gene 165 protein (300 aa).

2 disordered regions span residues 1–38 and 50–109; these read MLEKGEHIEYPNTPPLHSPPESHTFSSQTDDSYFHKPS and TNSS…STLE. A compositionally biased stretch (polar residues) spans 21–38; it reads ESHTFSSQTDDSYFHKPS. The span at 52–69 shows a compositional bias: low complexity; the sequence is SSVPSASRSPESIASSQS. Over residues 94–103 the composition is skewed to basic residues; sequence TLRKRGRKPK.

Its subcellular location is the nucleus. Has a role in meiosis. This Schizosaccharomyces pombe (strain 972 / ATCC 24843) (Fission yeast) protein is Meiotically up-regulated gene 165 protein (mug165).